The primary structure comprises 242 residues: 3-deoxy-manno-octulosonate cytidylyltransferase (242 aa).

It belongs to the KdsB family.

Its subcellular location is the cytoplasm. The catalysed reaction is 3-deoxy-alpha-D-manno-oct-2-ulosonate + CTP = CMP-3-deoxy-beta-D-manno-octulosonate + diphosphate. It participates in nucleotide-sugar biosynthesis; CMP-3-deoxy-D-manno-octulosonate biosynthesis; CMP-3-deoxy-D-manno-octulosonate from 3-deoxy-D-manno-octulosonate and CTP: step 1/1. Its pathway is bacterial outer membrane biogenesis; lipopolysaccharide biosynthesis. In terms of biological role, activates KDO (a required 8-carbon sugar) for incorporation into bacterial lipopolysaccharide in Gram-negative bacteria. The polypeptide is 3-deoxy-manno-octulosonate cytidylyltransferase (Anaeromyxobacter dehalogenans (strain 2CP-C)).